A 364-amino-acid chain; its full sequence is Chorismate synthase (364 aa).

NADP(+)-binding residues include arginine 48 and arginine 54. FMN is bound by residues 125–127 (RSS), 238–239 (NA), glycine 278, 293–297 (KPTSS), and arginine 319.

It belongs to the chorismate synthase family. Homotetramer. Requires FMNH2 as cofactor.

It carries out the reaction 5-O-(1-carboxyvinyl)-3-phosphoshikimate = chorismate + phosphate. It participates in metabolic intermediate biosynthesis; chorismate biosynthesis; chorismate from D-erythrose 4-phosphate and phosphoenolpyruvate: step 7/7. Its function is as follows. Catalyzes the anti-1,4-elimination of the C-3 phosphate and the C-6 proR hydrogen from 5-enolpyruvylshikimate-3-phosphate (EPSP) to yield chorismate, which is the branch point compound that serves as the starting substrate for the three terminal pathways of aromatic amino acid biosynthesis. This reaction introduces a second double bond into the aromatic ring system. The protein is Chorismate synthase of Shewanella sediminis (strain HAW-EB3).